The following is a 407-amino-acid chain: Cation efflux system protein CusB (407 aa).

The N-terminal stretch at 1-26 (MKKIALIIGSMIAGGIISAAGFTWFA) is a signal peptide.

Belongs to the membrane fusion protein (MFP) (TC 8.A.1) family. As to quaternary structure, the cus efflux system is composed of CusA, CusB, CusC and CusF.

Its function is as follows. Part of a cation efflux system that mediates resistance to copper and silver. This is Cation efflux system protein CusB (cusB) from Escherichia coli O6:H1 (strain CFT073 / ATCC 700928 / UPEC).